A 417-amino-acid chain; its full sequence is UPF0597 protein Cphy_1256 (417 aa).

The protein belongs to the UPF0597 family.

The protein is UPF0597 protein Cphy_1256 of Lachnoclostridium phytofermentans (strain ATCC 700394 / DSM 18823 / ISDg) (Clostridium phytofermentans).